The sequence spans 190 residues: dCTP deaminase (190 aa).

113–118 (KSTYAR) is a binding site for dCTP. Glu-139 acts as the Proton donor/acceptor in catalysis. DCTP is bound by residues Gln-158, Tyr-172, Lys-181, and Gln-182.

It belongs to the dCTP deaminase family. As to quaternary structure, homotrimer.

It catalyses the reaction dCTP + H2O + H(+) = dUTP + NH4(+). It participates in pyrimidine metabolism; dUMP biosynthesis; dUMP from dCTP (dUTP route): step 1/2. Its function is as follows. Catalyzes the deamination of dCTP to dUTP. The chain is dCTP deaminase from Chlamydia pneumoniae (Chlamydophila pneumoniae).